A 433-amino-acid polypeptide reads, in one-letter code: ATP-dependent protease ATPase subunit HslU (433 aa).

ATP contacts are provided by residues Val18, 60–65 (GVGKTE), Asp246, Glu311, and Arg383.

It belongs to the ClpX chaperone family. HslU subfamily. In terms of assembly, a double ring-shaped homohexamer of HslV is capped on each side by a ring-shaped HslU homohexamer. The assembly of the HslU/HslV complex is dependent on binding of ATP.

Its subcellular location is the cytoplasm. Functionally, ATPase subunit of a proteasome-like degradation complex; this subunit has chaperone activity. The binding of ATP and its subsequent hydrolysis by HslU are essential for unfolding of protein substrates subsequently hydrolyzed by HslV. HslU recognizes the N-terminal part of its protein substrates and unfolds these before they are guided to HslV for hydrolysis. This chain is ATP-dependent protease ATPase subunit HslU, found in Nitrobacter winogradskyi (strain ATCC 25391 / DSM 10237 / CIP 104748 / NCIMB 11846 / Nb-255).